A 484-amino-acid polypeptide reads, in one-letter code: 3-isopropylmalate dehydratase large subunit (484 aa).

The [4Fe-4S] cluster site is built by cysteine 352, cysteine 412, and cysteine 415. Residues 463–484 (TLSSPSDLDPAPASAAIRTDAA) are disordered. Residues 464-478 (LSSPSDLDPAPASAA) show a composition bias toward low complexity.

This sequence belongs to the aconitase/IPM isomerase family. LeuC type 1 subfamily. Heterodimer of LeuC and LeuD. Requires [4Fe-4S] cluster as cofactor.

It catalyses the reaction (2R,3S)-3-isopropylmalate = (2S)-2-isopropylmalate. Its pathway is amino-acid biosynthesis; L-leucine biosynthesis; L-leucine from 3-methyl-2-oxobutanoate: step 2/4. In terms of biological role, catalyzes the isomerization between 2-isopropylmalate and 3-isopropylmalate, via the formation of 2-isopropylmaleate. This is 3-isopropylmalate dehydratase large subunit from Pseudarthrobacter chlorophenolicus (strain ATCC 700700 / DSM 12829 / CIP 107037 / JCM 12360 / KCTC 9906 / NCIMB 13794 / A6) (Arthrobacter chlorophenolicus).